The primary structure comprises 319 residues: Ankyrin repeat domain-containing protein 1 (319 aa).

The stretch at 63–89 (EKEREAELKKKKLEQRSKLENLEDLEI) forms a coiled coil. ANK repeat units lie at residues 152-181 (YKRT…QIEF), 185-214 (LEST…KISA), 218-247 (LLST…DLNA), 251-280 (EGDT…DLNV), and 284-315 (AGKT…KASR).

As to quaternary structure, interacts with TTN/titin and YBX1. As to expression, expressed in heart. In postnatal neonatal heart, it is expressed in an asymmetrical way; left ventricle favored towards right ventricle. Whether or not this could be correlated with a hypertrophic heart is still a matter of debate. Levels increase gradually from newborn to adult.

Its subcellular location is the nucleus. In terms of biological role, may play an important role in endothelial cell activation. May act as a nuclear transcription factor that negatively regulates the expression of cardiac genes. The chain is Ankyrin repeat domain-containing protein 1 (ANKRD1) from Sus scrofa (Pig).